The chain runs to 78 residues: Large ribosomal subunit protein bL28 (78 aa).

Positions Met1–Ala21 are disordered.

It belongs to the bacterial ribosomal protein bL28 family.

The protein is Large ribosomal subunit protein bL28 of Shewanella woodyi (strain ATCC 51908 / MS32).